The primary structure comprises 267 residues: Glutamate racemase (267 aa).

Substrate is bound by residues 13–14 (DS) and 45–46 (YS). The active-site Proton donor/acceptor is cysteine 77. Residue 78–79 (NT) participates in substrate binding. Cysteine 188 serves as the catalytic Proton donor/acceptor. Substrate is bound at residue 189–190 (TH).

It belongs to the aspartate/glutamate racemases family.

It carries out the reaction L-glutamate = D-glutamate. The protein operates within cell wall biogenesis; peptidoglycan biosynthesis. Its function is as follows. Provides the (R)-glutamate required for cell wall biosynthesis. This Histophilus somni (strain 2336) (Haemophilus somnus) protein is Glutamate racemase.